We begin with the raw amino-acid sequence, 547 residues long: DEAD-box ATP-dependent RNA helicase 31 (547 aa).

Positions 1-34 (MFDFGLSEDDSELGEVDEDDGPSGFEDDLFDDEG) are enriched in acidic residues. Residues 1–74 (MFDFGLSEDD…HTRESGGGDS (74 aa)) are disordered. Residues 53 to 70 (IKGEPIDQEGVVHTRESG) show a composition bias toward basic and acidic residues. The short motif at 79–107 (TRFDECSLSPLTLKGVKAAGYERMTAVQE) is the Q motif element. In terms of domain architecture, Helicase ATP-binding spans 110 to 293 (LPIILKGKDV…HIAMKRDLEF (184 aa)). 123 to 130 (AKTGTGKT) contributes to the ATP binding site. The DEAD box motif lies at 241 to 244 (DEAD). The Helicase C-terminal domain maps to 327–478 (LLTDHISENV…TKRKVEKALA (152 aa)).

It belongs to the DEAD box helicase family.

The catalysed reaction is ATP + H2O = ADP + phosphate + H(+). This is DEAD-box ATP-dependent RNA helicase 31 from Oryza sativa subsp. japonica (Rice).